Consider the following 122-residue polypeptide: Large ribosomal subunit protein uL14c (122 aa).

It belongs to the universal ribosomal protein uL14 family. In terms of assembly, part of the 50S ribosomal subunit.

The protein localises to the plastid. The protein resides in the chloroplast. Its function is as follows. Binds to 23S rRNA. This Huperzia lucidula (Shining clubmoss) protein is Large ribosomal subunit protein uL14c.